A 189-amino-acid polypeptide reads, in one-letter code: Cancer/testis antigen family 45 member A3 (189 aa).

The disordered stretch occupies residues 81-119; sequence KDRMMQKPGSNAPVGGNVTSSFSGDDLECRETASSPKSQ.

This sequence belongs to the CT45 family. As to expression, testis specific. Expressed in cancer cell lines.

It is found in the nucleus. This chain is Cancer/testis antigen family 45 member A3, found in Homo sapiens (Human).